Reading from the N-terminus, the 267-residue chain is Ribosomal RNA large subunit methyltransferase E (267 aa).

Positions 52, 54, 72, 90, and 114 each coordinate S-adenosyl-L-methionine. Residue Lys154 is the Proton acceptor of the active site. Residues Glu212 to Arg252 show a composition bias toward low complexity. The segment at Glu212–Ala267 is disordered. Positions Pro253–Ala267 are enriched in basic residues.

It belongs to the class I-like SAM-binding methyltransferase superfamily. RNA methyltransferase RlmE family.

It is found in the cytoplasm. It catalyses the reaction uridine(2552) in 23S rRNA + S-adenosyl-L-methionine = 2'-O-methyluridine(2552) in 23S rRNA + S-adenosyl-L-homocysteine + H(+). Its function is as follows. Specifically methylates the uridine in position 2552 of 23S rRNA at the 2'-O position of the ribose in the fully assembled 50S ribosomal subunit. This Anaeromyxobacter dehalogenans (strain 2CP-C) protein is Ribosomal RNA large subunit methyltransferase E.